The sequence spans 209 residues: Small ribosomal subunit protein uS4 (209 aa).

Positions 98 to 164 constitute an S4 RNA-binding domain; sequence RRLDNVVYRL…LPIKNAIELN (67 aa).

Belongs to the universal ribosomal protein uS4 family. As to quaternary structure, part of the 30S ribosomal subunit. Contacts protein S5. The interaction surface between S4 and S5 is involved in control of translational fidelity.

Its function is as follows. One of the primary rRNA binding proteins, it binds directly to 16S rRNA where it nucleates assembly of the body of the 30S subunit. In terms of biological role, with S5 and S12 plays an important role in translational accuracy. The protein is Small ribosomal subunit protein uS4 of Thermosipho melanesiensis (strain DSM 12029 / CIP 104789 / BI429).